We begin with the raw amino-acid sequence, 316 residues long: Cell surface superoxide dismutase [Cu-Zn] 6 (316 aa).

The signal sequence occupies residues 1 to 18 (MIFIPIIILIYLVSIAAS). Cu cation contacts are provided by His78, His80, and His96. 2 residues coordinate Zn(2+): His96 and Asp119. Asn128 carries N-linked (GlcNAc...) asparagine glycosylation. Position 159 (His159) interacts with Cu cation. Asn162 and Asn240 each carry an N-linked (GlcNAc...) asparagine glycan. The interval 243 to 263 (DNVYSPEETRPSDQNKKSHRH) is disordered. A compositionally biased stretch (basic and acidic residues) spans 249–258 (EETRPSDQNK). Asn278 and Asn281 each carry an N-linked (GlcNAc...) asparagine glycan. The GPI-anchor amidated serine moiety is linked to residue Ser288. The propeptide at 289–316 (SDCLNDGMMVTGSVFGSLVLGIAAGIFV) is removed in mature form.

It belongs to the Cu-Zn superoxide dismutase family. Cu cation serves as cofactor. Zn(2+) is required as a cofactor. Post-translationally, the GPI-anchor is attached to the protein in the endoplasmic reticulum and serves to target the protein to the cell surface. There, the glucosamine-inositol phospholipid moiety is cleaved off and the GPI-modified mannoprotein is covalently attached via its lipidless GPI glycan remnant to the 1,6-beta-glucan of the outer cell wall layer.

The protein localises to the secreted. It localises to the cell wall. Its subcellular location is the membrane. It catalyses the reaction 2 superoxide + 2 H(+) = H2O2 + O2. In terms of biological role, superoxide dismutases serve to convert damaging superoxide radicals, a key form of ROS, to less damaging hydrogen peroxide that can be converted into water by catalase action. May be involved protection against extracellular stress. This chain is Cell surface superoxide dismutase [Cu-Zn] 6 (SOD6), found in Candida albicans (strain SC5314 / ATCC MYA-2876) (Yeast).